Consider the following 208-residue polypeptide: Uracil phosphoribosyltransferase (208 aa).

5-phospho-alpha-D-ribose 1-diphosphate is bound by residues R78, R103, and D130–S138. Uracil is bound by residues I193 and G198–A200. A 5-phospho-alpha-D-ribose 1-diphosphate-binding site is contributed by D199.

The protein belongs to the UPRTase family. Mg(2+) serves as cofactor.

The catalysed reaction is UMP + diphosphate = 5-phospho-alpha-D-ribose 1-diphosphate + uracil. The protein operates within pyrimidine metabolism; UMP biosynthesis via salvage pathway; UMP from uracil: step 1/1. With respect to regulation, allosterically activated by GTP. Catalyzes the conversion of uracil and 5-phospho-alpha-D-ribose 1-diphosphate (PRPP) to UMP and diphosphate. This is Uracil phosphoribosyltransferase from Neisseria meningitidis serogroup A / serotype 4A (strain DSM 15465 / Z2491).